A 368-amino-acid polypeptide reads, in one-letter code: Mitogen-activated protein kinase 7 (368 aa).

The 288-residue stretch at 32 to 319 (YVPIKPIGRG…VTDALLHPYM (288 aa)) folds into the Protein kinase domain. ATP is bound by residues 38–46 (IGRGAYGVV) and lysine 61. The active-site Proton acceptor is aspartate 158. Threonine 191 bears the Phosphothreonine mark. The TXY signature appears at 191-193 (TEY). Phosphotyrosine is present on tyrosine 193. Threonine 196 carries the phosphothreonine modification.

It belongs to the protein kinase superfamily. CMGC Ser/Thr protein kinase family. MAP kinase subfamily. In terms of assembly, interacts with MKK3. It depends on Mg(2+) as a cofactor. Post-translationally, dually phosphorylated on Thr-191 and Tyr-193, which activates the enzyme.

It carries out the reaction L-seryl-[protein] + ATP = O-phospho-L-seryl-[protein] + ADP + H(+). The enzyme catalyses L-threonyl-[protein] + ATP = O-phospho-L-threonyl-[protein] + ADP + H(+). Activated by threonine and tyrosine phosphorylation. Activated in response to hydrogen peroxide. Activation is triggered by MAPKKK17 and MAPKKK18 in a MKK3-dependent manner. MKK3-MPK7 module acts as a positive regulator of PR1 gene expression. This chain is Mitogen-activated protein kinase 7 (MPK7), found in Arabidopsis thaliana (Mouse-ear cress).